The chain runs to 327 residues: Phenylalanine--tRNA ligase alpha subunit (327 aa).

Glutamate 252 is a Mg(2+) binding site.

Belongs to the class-II aminoacyl-tRNA synthetase family. Phe-tRNA synthetase alpha subunit type 1 subfamily. Tetramer of two alpha and two beta subunits. The cofactor is Mg(2+).

It localises to the cytoplasm. It carries out the reaction tRNA(Phe) + L-phenylalanine + ATP = L-phenylalanyl-tRNA(Phe) + AMP + diphosphate + H(+). The chain is Phenylalanine--tRNA ligase alpha subunit from Aeromonas salmonicida (strain A449).